The chain runs to 732 residues: Copper-transporting ATPase (732 aa).

The Cytoplasmic segment spans residues 1–88 (MTKAQFYIEG…NPSFLTPNVK (88 aa)). One can recognise an HMA domain in the interval 2–68 (TKAQFYIEGM…QIEKLGYQPR (67 aa)). Cu(+) contacts are provided by C13 and C16. Residues 89 to 109 (LALVLLGTLGVLALSMFAPLL) traverse the membrane as a helical segment. Residues 110–122 (PLPSFLKNPFING) lie on the Extracellular side of the membrane. The helical transmembrane segment at 123–142 (IVQLVLSLMVMHMGRNFYVH) threads the bilayer. Residues 143–149 (GFKALWA) are Cytoplasmic-facing. The chain crosses the membrane as a helical span at residues 150 to 170 (RQPNMDSLIALGTSAALLYSL). Residues 171 to 187 (VLLFRAYTHAPIEGYYF) lie on the Extracellular side of the membrane. The chain crosses the membrane as a helical span at residues 188–208 (ESVCVILLFVMAGKRVEENSK). The Cytoplasmic segment spans residues 209–336 (DKALEAMQSL…KAPIARLADK (128 aa)). Residues 337-359 (VAGVFVPIVIGIASIAFLVWLVL) form a helical membrane-spanning segment. Residues 360–365 (GDFTRA) lie on the Extracellular side of the membrane. A helical membrane pass occupies residues 366-383 (LEVFIAILVISCPCALGL). At 384–663 (ATPMALLVAQ…KLSALTIANI (280 aa)) the chain is on the cytoplasmic side. D421 acts as the 4-aspartylphosphate intermediate in catalysis. 2 residues coordinate Mg(2+): D609 and D613. Residues 664–683 (KQNLFWAFCYNSIAIPLACG) form a helical membrane-spanning segment. The Extracellular portion of the chain corresponds to 684–694 (VAYKLGIMFNP). Residues 695–713 (MLASLAMSLSSVSVVLNAQ) form a helical membrane-spanning segment. At 714 to 732 (RLRGAHFKIRGSHENRHSS) the chain is on the cytoplasmic side.

The protein belongs to the cation transport ATPase (P-type) (TC 3.A.3) family. Type IB subfamily.

It localises to the cell membrane. It carries out the reaction Cu(+)(in) + ATP + H2O = Cu(+)(out) + ADP + phosphate + H(+). Functionally, probably involved in copper export. The polypeptide is Copper-transporting ATPase (copA) (Helicobacter felis (strain ATCC 49179 / CCUG 28539 / NCTC 12436 / CS1)).